Reading from the N-terminus, the 200-residue chain is Glycerol-3-phosphate acyltransferase (200 aa).

5 helical membrane-spanning segments follow: residues 2 to 22 (FNIP…AVIV), 51 to 71 (KAAA…VLLA), 84 to 104 (AIAA…FFGF), 114 to 134 (LGVL…IWLV), and 158 to 178 (LFFM…ILVL).

The protein belongs to the PlsY family. In terms of assembly, probably interacts with PlsX.

It is found in the cell inner membrane. It carries out the reaction an acyl phosphate + sn-glycerol 3-phosphate = a 1-acyl-sn-glycero-3-phosphate + phosphate. The protein operates within lipid metabolism; phospholipid metabolism. Catalyzes the transfer of an acyl group from acyl-phosphate (acyl-PO(4)) to glycerol-3-phosphate (G3P) to form lysophosphatidic acid (LPA). This enzyme utilizes acyl-phosphate as fatty acyl donor, but not acyl-CoA or acyl-ACP. The polypeptide is Glycerol-3-phosphate acyltransferase (Neisseria gonorrhoeae (strain ATCC 700825 / FA 1090)).